Reading from the N-terminus, the 83-residue chain is Hainantoxin-III 7 (83 aa).

The N-terminal stretch at 1–21 is a signal peptide; that stretch reads MKASMFLALAGLVLLFVVGYA. Residues 22–48 constitute a propeptide that is removed on maturation; sequence SESEEKEFPRELLSKVFAVDDFKGEER. 3 cysteine pairs are disulfide-bonded: cysteine 50-cysteine 65, cysteine 57-cysteine 70, and cysteine 64-cysteine 77. Leucine 81 is subject to Leucine amide.

This sequence belongs to the neurotoxin 10 (Hwtx-1) family. 15 (Hntx-3) subfamily. In terms of assembly, monomer. As to expression, expressed by the venom gland.

Its subcellular location is the secreted. Selective antagonist of neuronal tetrodotoxin (TTX)-sensitive voltage-gated sodium channels (IC(50)=1270 nM on Nav1.1/SCN1A, 270 nM on Nav1.2/SCN2A, 491 nM on Nav1.3/SCN3A and 232 nM on Nav1.7/SCN9A). This toxin suppress Nav1.7 current amplitude without significantly altering the activation, inactivation, and repriming kinetics. Short extreme depolarizations partially activate the toxin-bound channel, indicating voltage-dependent inhibition of this toxin. This toxin increases the deactivation of the Nav1.7 current after extreme depolarizations. The toxin-Nav1.7 complex is gradually dissociated upon prolonged strong depolarizations in a voltage-dependent manner, and the unbound toxin rebinds to Nav1.7 after a long repolarization. Moreover, analysis of chimeric channels showed that the DIIS3-S4 linker is critical for toxin binding to Nav1.7. These data are consistent with this toxin interacting with Nav1.7 site 4 and trapping the domain II voltage sensor in the closed state. The chain is Hainantoxin-III 7 from Cyriopagopus hainanus (Chinese bird spider).